Consider the following 327-residue polypeptide: tRNA-dihydrouridine(20/20a) synthase (327 aa).

Residues 11–13 (PML) and Gln63 contribute to the FMN site. Cys93 functions as the Proton donor in the catalytic mechanism. FMN contacts are provided by residues Lys132, His165, 205 to 207 (NGG), and 227 to 228 (GR).

This sequence belongs to the Dus family. DusA subfamily. Requires FMN as cofactor.

The enzyme catalyses 5,6-dihydrouridine(20) in tRNA + NADP(+) = uridine(20) in tRNA + NADPH + H(+). The catalysed reaction is 5,6-dihydrouridine(20) in tRNA + NAD(+) = uridine(20) in tRNA + NADH + H(+). It catalyses the reaction 5,6-dihydrouridine(20a) in tRNA + NADP(+) = uridine(20a) in tRNA + NADPH + H(+). It carries out the reaction 5,6-dihydrouridine(20a) in tRNA + NAD(+) = uridine(20a) in tRNA + NADH + H(+). Its function is as follows. Catalyzes the synthesis of 5,6-dihydrouridine (D), a modified base found in the D-loop of most tRNAs, via the reduction of the C5-C6 double bond in target uridines. Specifically modifies U20 and U20a in tRNAs. The polypeptide is tRNA-dihydrouridine(20/20a) synthase (Vibrio cholerae serotype O1 (strain ATCC 39315 / El Tor Inaba N16961)).